The chain runs to 238 residues: Endonuclease III homolog (238 aa).

The 27-residue stretch at Arg-129 to Met-155 folds into the HhH domain. Catalysis depends on Lys-149, which acts as the Nucleophile; for N-glycosylase activity. Cys-217, Cys-224, Cys-227, and Cys-233 together coordinate [4Fe-4S] cluster.

It belongs to the Nth/MutY family. [4Fe-4S] cluster serves as cofactor.

The protein resides in the nucleus. The protein localises to the mitochondrion. The catalysed reaction is 2'-deoxyribonucleotide-(2'-deoxyribose 5'-phosphate)-2'-deoxyribonucleotide-DNA = a 3'-end 2'-deoxyribonucleotide-(2,3-dehydro-2,3-deoxyribose 5'-phosphate)-DNA + a 5'-end 5'-phospho-2'-deoxyribonucleoside-DNA + H(+). Functionally, bifunctional DNA N-glycosylase with associated apurinic/apyrimidinic (AP) lyase function that catalyzes the first step in base excision repair (BER), the primary repair pathway for the repair of oxidative DNA damage. The DNA N-glycosylase activity releases the damaged DNA base from DNA by cleaving the N-glycosidic bond, leaving an AP site. The AP lyase activity cleaves the phosphodiester bond 3' to the AP site by a beta-elimination. Primarily recognizes and repairs oxidative base damage of pyrimidines. In Encephalitozoon cuniculi (strain GB-M1) (Microsporidian parasite), this protein is Endonuclease III homolog.